The primary structure comprises 917 residues: Bifunctional aspartokinase/homoserine dehydrogenase 2, chloroplastic (917 aa).

The N-terminal 89 residues, 1-89 (MQGLAVSCQL…EVNTYLPKGD (89 aa)), are a transit peptide targeting the chloroplast. The aspartokinase stretch occupies residues 90–338 (MWSVHKFGGT…VSEAVILSTL (249 aa)). The tract at residues 339-563 (SYQEAWEMSY…LSKTTLAVGI (225 aa)) is interface. 2 consecutive ACT domains span residues 413–488 (VEGT…VING) and 494–571 (AVGL…LIGG). Residues 564-917 (IGPGLIGGAL…RLASYLGAPS (354 aa)) are homoserine dehydrogenase. The NAD(+) site is built by I569 and T650. I569, T650, and K674 together coordinate NADP(+). Positions 569, 650, and 674 each coordinate NADPH. Na(+) is bound by residues E701, V704, A706, and L708. NADP(+)-binding residues include G759 and E762. E762 and D773 together coordinate L-homoserine. K777 serves as the catalytic Proton donor. G894 contributes to the NAD(+) binding site. NADP(+) is bound at residue G894. G894 is an NADPH binding site.

This sequence in the N-terminal section; belongs to the aspartokinase family. In the C-terminal section; belongs to the homoserine dehydrogenase family. As to quaternary structure, homo- or heterodimer. Requires a metal cation as cofactor.

Its subcellular location is the plastid. It localises to the chloroplast. The catalysed reaction is L-homoserine + NADP(+) = L-aspartate 4-semialdehyde + NADPH + H(+). It catalyses the reaction L-homoserine + NAD(+) = L-aspartate 4-semialdehyde + NADH + H(+). The enzyme catalyses L-aspartate + ATP = 4-phospho-L-aspartate + ADP. It functions in the pathway amino-acid biosynthesis; L-lysine biosynthesis via DAP pathway; (S)-tetrahydrodipicolinate from L-aspartate: step 1/4. The protein operates within amino-acid biosynthesis; L-methionine biosynthesis via de novo pathway; L-homoserine from L-aspartate: step 1/3. Its pathway is amino-acid biosynthesis; L-methionine biosynthesis via de novo pathway; L-homoserine from L-aspartate: step 3/3. It participates in amino-acid biosynthesis; L-threonine biosynthesis; L-threonine from L-aspartate: step 1/5. It functions in the pathway amino-acid biosynthesis; L-threonine biosynthesis; L-threonine from L-aspartate: step 3/5. Functionally, bifunctional aspartate kinase and homoserine dehydrogenase that catalyzes the first and the third steps toward the synthesis of lysine, methionine and threonine from aspartate. The protein is Bifunctional aspartokinase/homoserine dehydrogenase 2, chloroplastic (AKHSDH2) of Zea mays (Maize).